We begin with the raw amino-acid sequence, 326 residues long: Phospho-N-acetylmuramoyl-pentapeptide-transferase (326 aa).

9 consecutive transmembrane segments (helical) span residues 3-23 (ISISAGIVTFLLTLVGIPAFI), 51-71 (TMGGLVFLITSVLVAFFFALF), 79-99 (VGMILFILVLYGLVGFLDDFL), 115-135 (LALQLLGGVIFYLFYERGGDI), 138-158 (VFGYPVHLGFFYIFFALFWLV), 169-189 (GVDGLASISVVISLFAYGVIA), 195-215 (MDILLVILAMIGGLLGFFIFN), 221-243 (VFMGDVGSLALGGMLAAISMALH), and 306-326 (FFFWGVGLLASLLTLAILYLM).

It belongs to the glycosyltransferase 4 family. MraY subfamily. Mg(2+) serves as cofactor.

It is found in the cell membrane. It catalyses the reaction UDP-N-acetyl-alpha-D-muramoyl-L-alanyl-gamma-D-glutamyl-L-lysyl-D-alanyl-D-alanine + di-trans,octa-cis-undecaprenyl phosphate = Mur2Ac(oyl-L-Ala-gamma-D-Glu-L-Lys-D-Ala-D-Ala)-di-trans,octa-cis-undecaprenyl diphosphate + UMP. It functions in the pathway cell wall biogenesis; peptidoglycan biosynthesis. In terms of biological role, catalyzes the initial step of the lipid cycle reactions in the biosynthesis of the cell wall peptidoglycan: transfers peptidoglycan precursor phospho-MurNAc-pentapeptide from UDP-MurNAc-pentapeptide onto the lipid carrier undecaprenyl phosphate, yielding undecaprenyl-pyrophosphoryl-MurNAc-pentapeptide, known as lipid I. The polypeptide is Phospho-N-acetylmuramoyl-pentapeptide-transferase (Streptococcus pneumoniae serotype 2 (strain D39 / NCTC 7466)).